A 931-amino-acid chain; its full sequence is Up-regulator of cell proliferation (931 aa).

Serine 3 bears the Phosphoserine mark. The VLIG-type G domain maps to 689–929; the sequence is RSRLVVLSTV…NIQQLIELVR (241 aa).

Belongs to the TRAFAC class dynamin-like GTPase superfamily. Very large inducible GTPase (VLIG) family. In terms of tissue distribution, strongly expressed in hepatitis B virus-infected liver and in HCC cells. Also highly expressed in well-differentiated gastric cancer tissues and various gastric cancer cell lines.

Its subcellular location is the cytoplasm. The protein localises to the nucleus. Its function is as follows. May be involved in cell cycle progression through the regulation of cyclin D1 expression. May participate in the development of hepatocellular carcinoma (HCC) by promoting hepatocellular growth and survival. May play an important role in development of gastric cancer. The polypeptide is Up-regulator of cell proliferation (URGCP) (Homo sapiens (Human)).